The sequence spans 379 residues: MKFFDREREINEILHILNREPDDIYFIYGPLNSGKTALIKHIIENKLSDDYKVFYINFRTYLISEKREFIEAIFTTKKDDFFEKIKDKDEVLNLITKGVRILTGIPIPEVEFDKLFEEKINDAFQYLNSLLLEVKKSGKKPILIFDELQMIKDVVLNTENQRFSAFPSLRFGNGQKYLLKELFQFLVSLTKEQHLCHVFCLSSDSLFIEYVYSTGELEGRAKYLLVDDFDKETALKFMDFLAVENNINLTNEDKELIYSYVGGKPKDIKYVVEESKFKDLREILEFMLKDAVQKLDMFLDMLNYSKPKVDVGDEVIEIKKDNVIEALKLFKDEYEVSKKHIPVPVYTYLIKRNILFLNPIEGILKPQSYLVWNAIKRLL.

ATP is bound at residue 29-36 (GPLNSGKT).

It belongs to the archaeal ATPase family.

This is an uncharacterized protein from Methanocaldococcus jannaschii (strain ATCC 43067 / DSM 2661 / JAL-1 / JCM 10045 / NBRC 100440) (Methanococcus jannaschii).